A 217-amino-acid polypeptide reads, in one-letter code: Ribonuclease T (217 aa).

Positions 20 to 194 constitute an Exonuclease domain; sequence VVIDVETGGF…YDTDRTAELF (175 aa). Asp23, Glu25, His181, and Asp186 together coordinate Mg(2+). Catalysis depends on His181, which acts as the Proton donor/acceptor.

The protein belongs to the RNase T family. In terms of assembly, homodimer. It depends on Mg(2+) as a cofactor.

Functionally, trims short 3' overhangs of a variety of RNA species, leaving a one or two nucleotide 3' overhang. Responsible for the end-turnover of tRNA: specifically removes the terminal AMP residue from uncharged tRNA (tRNA-C-C-A). Also appears to be involved in tRNA biosynthesis. The sequence is that of Ribonuclease T from Photorhabdus laumondii subsp. laumondii (strain DSM 15139 / CIP 105565 / TT01) (Photorhabdus luminescens subsp. laumondii).